We begin with the raw amino-acid sequence, 425 residues long: Histidine--tRNA ligase (425 aa).

The protein belongs to the class-II aminoacyl-tRNA synthetase family. In terms of assembly, homodimer.

Its subcellular location is the cytoplasm. It catalyses the reaction tRNA(His) + L-histidine + ATP = L-histidyl-tRNA(His) + AMP + diphosphate + H(+). This chain is Histidine--tRNA ligase, found in Streptococcus uberis (strain ATCC BAA-854 / 0140J).